We begin with the raw amino-acid sequence, 95 residues long: Aspartyl/glutamyl-tRNA(Asn/Gln) amidotransferase subunit C (95 aa).

It belongs to the GatC family. As to quaternary structure, heterotrimer of A, B and C subunits.

The enzyme catalyses L-glutamyl-tRNA(Gln) + L-glutamine + ATP + H2O = L-glutaminyl-tRNA(Gln) + L-glutamate + ADP + phosphate + H(+). The catalysed reaction is L-aspartyl-tRNA(Asn) + L-glutamine + ATP + H2O = L-asparaginyl-tRNA(Asn) + L-glutamate + ADP + phosphate + 2 H(+). Its function is as follows. Allows the formation of correctly charged Asn-tRNA(Asn) or Gln-tRNA(Gln) through the transamidation of misacylated Asp-tRNA(Asn) or Glu-tRNA(Gln) in organisms which lack either or both of asparaginyl-tRNA or glutaminyl-tRNA synthetases. The reaction takes place in the presence of glutamine and ATP through an activated phospho-Asp-tRNA(Asn) or phospho-Glu-tRNA(Gln). This is Aspartyl/glutamyl-tRNA(Asn/Gln) amidotransferase subunit C from Maricaulis maris (strain MCS10) (Caulobacter maris).